The chain runs to 966 residues: Protein mes-1 (966 aa).

A signal peptide spans 1–19; sequence MKIHHFLTLLCTFLPLTTT. Residues 20–470 are Extracellular-facing; the sequence is ALTNSTPLSL…QASDIPTSVE (451 aa). Residues asparagine 62, asparagine 126, asparagine 183, asparagine 214, asparagine 251, and asparagine 372 are each glycosylated (N-linked (GlcNAc...) asparagine). A helical membrane pass occupies residues 471 to 491; the sequence is LMAVVLATSAIFALIALFLLY. The Cytoplasmic portion of the chain corresponds to 492 to 966; the sequence is RKRKRDKKAR…FKSVNVAATV (475 aa). The Protein kinase domain occupies 656-966; sequence HNFNERIEKQ…FKSVNVAATV (311 aa). ATP contacts are provided by residues 662 to 670 and lysine 685; that span reads IEKQAYWLM.

Belongs to the protein kinase superfamily.

It localises to the cell membrane. During early embryogenesis, controls asymmetric cell division and the asymmetric localization of P granules of germline precursor P2 and its descendant P3. Probably upstream of tyrosine kinase src-1, plays a role in endoderm development by controlling spindle orientation during EMS blastomere cell division. Controls EMS spindle orientation probably by promoting lin-5 and gpr-1/2 enrichment at, and let-99 exclusion from the junction between P2 and EMS cells. In Caenorhabditis elegans, this protein is Protein mes-1.